The primary structure comprises 334 residues: MNRTIRRHTLRALLAALCIAPLGMQGAARADAPLKIGFLVKMPEQAWFINEQNAASALGQKENFSVVKIGTPDGEKVLAAIDNLGSQGAQGFVICAPDVRLGPAIAARAKRYNMKFVTVDDQLVDSTGKPLPNVPHLGMSATKIGNQVGQAISDEMKRRGWKPEEVGALRITNYELPTAKLRTDGATQALLANGFRKENIFDAPQKTTDDEGGFSAAAPVLARHPNVKKWVVYALNEETVLGAVRATEQLHIPAADVIGVGINGAGEAFAEFQKKEPTGFYGTIAVSSTNHGKDSTQNLVEWIRDGKTPPADTQTSGKLMTRANWQAVRAELGI.

An N-terminal signal peptide occupies residues 1-30; that stretch reads MNRTIRRHTLRALLAALCIAPLGMQGAARA.

Belongs to the bacterial solute-binding protein 2 family. As to quaternary structure, the complex is composed of two ATP-binding proteins (AraG), two transmembrane proteins (AraH) and a solute-binding protein (AraF).

It is found in the periplasm. Functionally, part of the ABC transporter complex AraFGH involved in L-arabinose import. Binds with high affinity to L-arabinose. The sequence is that of ABC transporter L-arabinose-binding periplasmic protein (araF) from Azospirillum brasilense.